Reading from the N-terminus, the 413-residue chain is Floricaula/leafy homolog 1 (413 aa).

Disordered regions lie at residues 154–177 (EGLSEEPVQQQEREAVGSGGGGTT) and 191–239 (QRRR…RQRE). The segment covering 201–210 (GRERRGRASA) has biased composition (basic and acidic residues). A compositionally biased stretch (acidic residues) spans 211–225 (EEDEETEEGQEDEWN). 3 consecutive DNA-binding regions follow at residues 238–242 (REHPF), 307–314 (NKPKMRHY), and 378–381 (YVPT).

Belongs to the FLO/LFY family. Expressed in floral meristems and in indeterminate vegetative meristems.

The protein resides in the nucleus. Probable transcription factor that act to specify determinacy in the progenitor cells for both flowers and leaves. The chain is Floricaula/leafy homolog 1 (FL1) from Nicotiana tabacum (Common tobacco).